Consider the following 745-residue polypeptide: Aminopeptidase NAALADL1 (745 aa).

The Cytoplasmic portion of the chain corresponds to Met1–Ile6. The chain crosses the membrane as a helical; Signal-anchor for type II membrane protein span at residues Leu7–Ile28. Topologically, residues Pro29–Leu745 are extracellular. N-linked (GlcNAc...) asparagine glycosylation is found at Asn128, Asn141, and Asn235. Ca(2+) contacts are provided by Thr263 and Leu266. 3 N-linked (GlcNAc...) asparagine glycosylation sites follow: Asn279, Asn304, and Asn350. Cysteines 301 and 318 form a disulfide. Zn(2+)-binding residues include His373 and Asp383. The active-site Proton donor/acceptor is the Glu421. Position 422 (Glu422) interacts with Zn(2+). Ca(2+)-binding residues include Glu430 and Glu433. Position 450 (Asp450) interacts with Zn(2+). 2 N-linked (GlcNAc...) asparagine glycosylation sites follow: Asn456 and Asn497. A Zn(2+)-binding site is contributed by His550. N-linked (GlcNAc...) asparagine glycosylation is found at Asn593 and Asn620.

Belongs to the peptidase M28 family. M28B subfamily. In terms of assembly, homodimer. The cofactor is Zn(2+). In terms of processing, N-glycosylated. In terms of tissue distribution, detected on apical villi on the brush border membrane of ileum enterocytes (at protein level). Mainly expressed in the distal small intestine.

The protein resides in the apical cell membrane. Aminopeptidase with broad substrate specificity. Has lower activity with substrates that have Asp or Glu in the P2' position, or Pro in the P3' position. Lacks activity with substrates that have both Pro in the P3' position and Asp or Glu in the P2' position. Lacks carboxypeptidase activity. Lacks dipeptidyl-peptidase IV type activity. This Rattus norvegicus (Rat) protein is Aminopeptidase NAALADL1 (Naaladl1).